A 316-amino-acid chain; its full sequence is Olfactory receptor 2K2 (316 aa).

Over 1–20 the chain is Extracellular; that stretch reads MQGENFTIWSIFFLEGFSQY. Residue N5 is glycosylated (N-linked (GlcNAc...) asparagine). The helical transmembrane segment at 21 to 41 threads the bilayer; that stretch reads PGLEVVLFVFSLVMYLTTLLG. Over 42–65 the chain is Cytoplasmic; that stretch reads NSTLILITILDSRLKTPMYLFLGN. Residues 66-86 traverse the membrane as a helical segment; sequence LSFMDICYTSASVPTLLVNLL. Topologically, residues 87–97 are extracellular; sequence SSQKTIIFSGC. The cysteines at positions 97 and 188 are disulfide-linked. Residues 98-118 traverse the membrane as a helical segment; that stretch reads AVQMYLSLAMGSTECVLLAVM. At 119–143 the chain is on the cytoplasmic side; it reads AYDRYVAICNPLRYSIIMNRCVCAR. A helical membrane pass occupies residues 144 to 164; sequence MATVSWVTGCLTALLETSFAL. Residues 165 to 199 lie on the Extracellular side of the membrane; it reads QIPLCGNLIDHFTCEILAVLKLACTSSLLMNTIML. Residues 200–220 form a helical membrane-spanning segment; that stretch reads VVSILLLPIPMLLVCISYIFI. Over 221 to 238 the chain is Cytoplasmic; sequence LSTILRITSAEGRNKAFS. The helical transmembrane segment at 239–259 threads the bilayer; that stretch reads TCGAHLTVVILYYGAALSMYL. The Extracellular segment spans residues 260–270; sequence KPSSSNAQKID. A helical membrane pass occupies residues 271 to 291; it reads KIISLLYGVLTPMLNPIIYSL. Residues 292–316 are Cytoplasmic-facing; sequence RNKEVKDAMKKLLGKITLHQTHEHL.

This sequence belongs to the G-protein coupled receptor 1 family.

The protein resides in the cell membrane. Odorant receptor. The sequence is that of Olfactory receptor 2K2 (OR2K2) from Homo sapiens (Human).